The chain runs to 540 residues: MNTLLEHSCDVLIIGSGAAGLSLALRLADQHQVIVLSKGPVTEGSTFYAQGGIAAVFDETDSIDSHVEDTLIAGAGICDRHAVEFVASNARSCVQWLIDQGVLFDTHIQPNGEESYHLTREGGHSHRRILHAADATGREVETTLVSKALNHPNIRVLERSNAVDLIISDKIGLPGTRRVVGAWVWNRNKEKVETCHAKAVVLATGGASKVYQYTTNPDISSGDGIAMAWRAGCRVANLEFNQFHPTALYHPQARNFLLTEALRGEGAYLKRPDGTRFMPDFDVRGELAPRDIVARAIDHEMKRLGADCMFLDISHKPADFIRQHFPMIYEKLLGLGIDLTQEPVPIVPAAHYTCGGVMVDDHGRTDVEGLYAIGEVSYTGLHGANRMASNSLLECLVYGWSAAEDITRRMPYAHDISTLPPWDESRVENPDERVIIQHNWHELRLFMWDYVGIVRTTKRLERALRRITMLQQEIDEYYAHFRVSNNLLELRNLVQVAELIVRCAMMRKESRGLHFTLDYPELLTHSGPSILSPGNHYINR.

FAD contacts are provided by residues 16–19 (SGAA), lysine 38, 45–52 (STFYAQGG), and aspartate 223. The Proton donor/acceptor role is filled by arginine 290. Residues glutamate 375 and 391 to 392 (SL) contribute to the FAD site.

This sequence belongs to the FAD-dependent oxidoreductase 2 family. NadB subfamily. The cofactor is FAD.

Its subcellular location is the cytoplasm. The catalysed reaction is L-aspartate + O2 = iminosuccinate + H2O2. The enzyme catalyses fumarate + L-aspartate = iminosuccinate + succinate. It functions in the pathway cofactor biosynthesis; NAD(+) biosynthesis; iminoaspartate from L-aspartate (oxidase route): step 1/1. Catalyzes the oxidation of L-aspartate to iminoaspartate, the first step in the de novo biosynthesis of NAD(+). Can use either oxygen or fumarate as electron acceptors, which allows the enzyme to be functional under aerobic and anaerobic conditions. This chain is L-aspartate oxidase (nadB), found in Escherichia coli O157:H7.